The sequence spans 374 residues: Calcium/calmodulin-dependent protein kinase type 1 (374 aa).

The 257-residue stretch at tyrosine 20–isoleucine 276 folds into the Protein kinase domain. ATP contacts are provided by residues leucine 26 to valine 34 and lysine 49. A Glycyl lysine isopeptide (Lys-Gly) (interchain with G-Cter in ubiquitin) cross-link involves residue lysine 59. Aspartate 141 (proton acceptor) is an active-site residue. Position 177 is a phosphothreonine; by CaMKK1 and CaMKK2 (threonine 177). The segment at isoleucine 276–methionine 316 is autoinhibitory domain. Residues lysine 296–arginine 317 form a calmodulin-binding region. The short motif at histidine 315–leucine 321 is the Nuclear export signal element.

It belongs to the protein kinase superfamily. CAMK Ser/Thr protein kinase family. CaMK subfamily. As to quaternary structure, monomer. Interacts with XPO1. Post-translationally, phosphorylated by CaMKK1 and CaMKK2 on Thr-177. In terms of processing, polybiquitinated by the E3 ubiquitin-protein ligase complex SCF(FBXL12), leading to proteasomal degradation. Ubiquitous.

The protein localises to the cytoplasm. Its subcellular location is the nucleus. The catalysed reaction is L-seryl-[protein] + ATP = O-phospho-L-seryl-[protein] + ADP + H(+). The enzyme catalyses L-threonyl-[protein] + ATP = O-phospho-L-threonyl-[protein] + ADP + H(+). Activated by Ca(2+)/calmodulin. Binding of calmodulin results in conformational change that relieves intrasteric autoinhibition and allows phosphorylation of Thr-177 within the activation loop by CaMKK1 or CaMKK2. Phosphorylation of Thr-177 results in several fold increase in total activity. Unlike CaMK4, is unable to exhibit autonomous activity after Ca(2+)/calmodulin activation. Calcium/calmodulin-dependent protein kinase that operates in the calcium-triggered CaMKK-CaMK1 signaling cascade and, upon calcium influx, regulates transcription activators activity, cell cycle, hormone production, cell differentiation, actin filament organization and neurite outgrowth. Recognizes the substrate consensus sequence [MVLIF]-x-R-x(2)-[ST]-x(3)-[MVLIF]. Regulates axonal extension and growth cone motility in hippocampal and cerebellar nerve cells. Upon NMDA receptor-mediated Ca(2+) elevation, promotes dendritic growth in hippocampal neurons and is essential in synapses for full long-term potentiation (LTP) and ERK2-dependent translational activation. Downstream of NMDA receptors, promotes the formation of spines and synapses in hippocampal neurons by phosphorylating ARHGEF7/BETAPIX on 'Ser-673', which results in the enhancement of ARHGEF7 activity and activation of RAC1. Promotes neuronal differentiation and neurite outgrowth by activation and phosphorylation of MARK2 on 'Ser-91', 'Ser-92', 'Ser-93' and 'Ser-294'. Promotes nuclear export of HDAC5 and binding to 14-3-3 by phosphorylation of 'Ser-259' and 'Ser-498' in the regulation of muscle cell differentiation. Regulates NUMB-mediated endocytosis by phosphorylation of NUMB on 'Ser-276' and 'Ser-295'. Involved in the regulation of basal and estrogen-stimulated migration of medulloblastoma cells through ARHGEF7/BETAPIX phosphorylation. Is required for proper activation of cyclin-D1/CDK4 complex during G1 progression in diploid fibroblasts. Plays a role in K(+) and ANG2-mediated regulation of the aldosterone synthase (CYP11B2) to produce aldosterone in the adrenal cortex. Phosphorylates EIF4G3/eIF4GII. In vitro phosphorylates CREB1, ATF1, CFTR, MYL9 and SYN1/synapsin I. This is Calcium/calmodulin-dependent protein kinase type 1 (Camk1) from Mus musculus (Mouse).